A 100-amino-acid polypeptide reads, in one-letter code: Cell division topological specificity factor (100 aa).

It belongs to the MinE family.

Prevents the cell division inhibition by proteins MinC and MinD at internal division sites while permitting inhibition at polar sites. This ensures cell division at the proper site by restricting the formation of a division septum at the midpoint of the long axis of the cell. The chain is Cell division topological specificity factor from Synechococcus sp. (strain JA-2-3B'a(2-13)) (Cyanobacteria bacterium Yellowstone B-Prime).